The following is a 769-amino-acid chain: 5-methyltetrahydropteroyltriglutamate--homocysteine methyltransferase (769 aa).

5-methyltetrahydropteroyltri-L-glutamate contacts are provided by residues Arg16 to Lys19 and Lys118. L-homocysteine contacts are provided by residues Ile440–Ser442 and Glu493. L-methionine is bound by residues Ile440–Ser442 and Glu493. 5-methyltetrahydropteroyltri-L-glutamate-binding positions include Arg524–Cys525 and Trp570. Residue Asp608 participates in L-homocysteine binding. Asp608 contributes to the L-methionine binding site. Glu614 is a 5-methyltetrahydropteroyltri-L-glutamate binding site. His650, Cys652, and Glu674 together coordinate Zn(2+). The active-site Proton donor is the His706. Cys738 lines the Zn(2+) pocket.

Belongs to the vitamin-B12 independent methionine synthase family. Requires Zn(2+) as cofactor.

It catalyses the reaction 5-methyltetrahydropteroyltri-L-glutamate + L-homocysteine = tetrahydropteroyltri-L-glutamate + L-methionine. It functions in the pathway amino-acid biosynthesis; L-methionine biosynthesis via de novo pathway; L-methionine from L-homocysteine (MetE route): step 1/1. Catalyzes the transfer of a methyl group from 5-methyltetrahydrofolate to homocysteine resulting in methionine formation. In Acidiphilium cryptum (strain JF-5), this protein is 5-methyltetrahydropteroyltriglutamate--homocysteine methyltransferase.